Here is a 557-residue protein sequence, read N- to C-terminus: 2-succinyl-5-enolpyruvyl-6-hydroxy-3-cyclohexene-1-carboxylate synthase (557 aa).

It belongs to the TPP enzyme family. MenD subfamily. As to quaternary structure, homodimer. Mg(2+) serves as cofactor. The cofactor is Mn(2+). Requires thiamine diphosphate as cofactor.

The enzyme catalyses isochorismate + 2-oxoglutarate + H(+) = 5-enolpyruvoyl-6-hydroxy-2-succinyl-cyclohex-3-ene-1-carboxylate + CO2. The protein operates within quinol/quinone metabolism; 1,4-dihydroxy-2-naphthoate biosynthesis; 1,4-dihydroxy-2-naphthoate from chorismate: step 2/7. It functions in the pathway quinol/quinone metabolism; menaquinone biosynthesis. Catalyzes the thiamine diphosphate-dependent decarboxylation of 2-oxoglutarate and the subsequent addition of the resulting succinic semialdehyde-thiamine pyrophosphate anion to isochorismate to yield 2-succinyl-5-enolpyruvyl-6-hydroxy-3-cyclohexene-1-carboxylate (SEPHCHC). This chain is 2-succinyl-5-enolpyruvyl-6-hydroxy-3-cyclohexene-1-carboxylate synthase, found in Yersinia enterocolitica serotype O:8 / biotype 1B (strain NCTC 13174 / 8081).